Consider the following 427-residue polypeptide: Kynureninase (427 aa).

Pyridoxal 5'-phosphate-binding positions include threonine 104, threonine 105, 132–135 (FPSD), aspartate 213, histidine 216, and tyrosine 238. Position 239 is an N6-(pyridoxal phosphate)lysine (lysine 239). Residues tryptophan 267 and threonine 295 each coordinate pyridoxal 5'-phosphate.

This sequence belongs to the kynureninase family. As to quaternary structure, homodimer. Requires pyridoxal 5'-phosphate as cofactor.

It carries out the reaction L-kynurenine + H2O = anthranilate + L-alanine + H(+). It catalyses the reaction 3-hydroxy-L-kynurenine + H2O = 3-hydroxyanthranilate + L-alanine + H(+). It participates in amino-acid degradation; L-kynurenine degradation; L-alanine and anthranilate from L-kynurenine: step 1/1. The protein operates within cofactor biosynthesis; NAD(+) biosynthesis; quinolinate from L-kynurenine: step 2/3. Its function is as follows. Catalyzes the cleavage of L-kynurenine (L-Kyn) and L-3-hydroxykynurenine (L-3OHKyn) into anthranilic acid (AA) and 3-hydroxyanthranilic acid (3-OHAA), respectively. The chain is Kynureninase from Shouchella clausii (strain KSM-K16) (Alkalihalobacillus clausii).